The sequence spans 206 residues: MYEDLNGKQLEILNYMKMEINKRGYPPSVREICEAVGLRSTSTVHGHLAKLEDKGYIRRDPTKPRAIEILSNDPFSDYSHNKEMVQVPIVGKVTAGQPILATENIEDTFPLPLNFIDHGNTFILNVKGESMIEAGILDNDYVVIRQQSTASNGDIVVALIDDEATVKRFFKESDHIRLQPENSLMDPILLKDVVILGKVIGVFRKL.

Positions 29-49 (VREICEAVGLRSTSTVHGHLA) form a DNA-binding region, H-T-H motif. Active-site for autocatalytic cleavage activity residues include Ser130 and Lys167.

The protein belongs to the peptidase S24 family. In terms of assembly, homodimer.

It carries out the reaction Hydrolysis of Ala-|-Gly bond in repressor LexA.. Its function is as follows. Represses a number of genes involved in the response to DNA damage (SOS response), including recA and lexA. In the presence of single-stranded DNA, RecA interacts with LexA causing an autocatalytic cleavage which disrupts the DNA-binding part of LexA, leading to derepression of the SOS regulon and eventually DNA repair. The polypeptide is LexA repressor (Alkaliphilus oremlandii (strain OhILAs) (Clostridium oremlandii (strain OhILAs))).